Consider the following 625-residue polypeptide: Interferon-induced GTP-binding protein MxE (625 aa).

The Dynamin-type G domain occupies 40–313 (DLNLPAIAVI…LVEHIAKNLP (274 aa)). The G1 motif stretch occupies residues 50-57 (GDQSSGKS). GTP is bound at residue 50-57 (GDQSSGKS). The tract at residues 75 to 77 (VTR) is G2 motif. Positions 151-154 (DLPG) are G3 motif. GTP-binding positions include 151-155 (DLPGI) and 220-223 (TKPD). The segment at 220–223 (TKPD) is G4 motif. Residues 252–255 (KCRG) form a G5 motif region. Positions 536–625 (VREMAYHLTS…RVLSKFVHSA (90 aa)) constitute a GED domain.

The protein belongs to the TRAFAC class dynamin-like GTPase superfamily. Dynamin/Fzo/YdjA family.

It localises to the cytoplasm. The chain is Interferon-induced GTP-binding protein MxE (mxe) from Danio rerio (Zebrafish).